Consider the following 88-residue polypeptide: Large ribosomal subunit protein bL31B (88 aa).

Belongs to the bacterial ribosomal protein bL31 family. Type B subfamily. Part of the 50S ribosomal subunit.

This chain is Large ribosomal subunit protein bL31B, found in Nocardia farcinica (strain IFM 10152).